The sequence spans 174 residues: uncharacterized protein (174 aa).

This is an uncharacterized protein from Acidianus convivator (ABV).